We begin with the raw amino-acid sequence, 580 residues long: FAD-dependent monooxygenase DEP4 (580 aa).

47–50 serves as a coordination point for FAD; it reads VWSK. Position 58–60 (58–60) interacts with NADP(+); that stretch reads FAQ. Valine 112 contributes to the FAD binding site. Residues 186 to 205, 222 to 223, and 354 to 355 each bind NADP(+); these read VGRS…AGKK, AP, and DI. Methionine 473 provides a ligand contact to FAD.

It belongs to the FAD-binding monooxygenase family. It depends on FAD as a cofactor.

It participates in polyketide biosynthesis. Its function is as follows. Part of the gene cluster that mediates the biosynthesis of depudecin, a highly oxidized eleven-carbon linear polyketide that acts as a histone deacetylase (HDAC) inhibitor and makes a small contribution to pathogenesis. The reducing polyketide synthase DEP5 is the central enzyme in depudecin biosynthesis by yielding the backbone polyketide chain. The monooxygenases DEP2 and DEP4, as well as the uncharacterized protein DEP1, then act as tailoring enzymes to modify the intermediate polyketide chain into depudecin. This chain is FAD-dependent monooxygenase DEP4, found in Fusarium langsethiae.